The chain runs to 161 residues: Ribosome maturation factor RimP (161 aa).

This sequence belongs to the RimP family.

The protein localises to the cytoplasm. In terms of biological role, required for maturation of 30S ribosomal subunits. The protein is Ribosome maturation factor RimP of Rickettsia felis (strain ATCC VR-1525 / URRWXCal2) (Rickettsia azadi).